A 185-amino-acid polypeptide reads, in one-letter code: Ribosome-recycling factor (185 aa).

Belongs to the RRF family.

The protein resides in the cytoplasm. Its function is as follows. Responsible for the release of ribosomes from messenger RNA at the termination of protein biosynthesis. May increase the efficiency of translation by recycling ribosomes from one round of translation to another. This is Ribosome-recycling factor from Hamiltonella defensa subsp. Acyrthosiphon pisum (strain 5AT).